The chain runs to 366 residues: MRTLKIFALAVSLLSMLAAPVQASRIKDIASVQGVRSNQLIGYGLVVGLPGTGEQTPFTDQTFRTMLGNFGINIPANERPKIDNVAAVAVHAELPAFAKPGQKIDVTVSSVGSADGLTGGTLMQTFLKGANGEVYAVAQGSLIVGGLGAEGNDGSRIVINTPTVGRIPNGGVVEREVRSGFGSSDYLTFNLHQSDFTTAKRMAETINNLVGDGTAQAVDATSVRVRAPRDLSQRVSYMSTLENLEVQQASASAKIIVNARTGTIVVGQNVELRPAAVAHGNMQVTIAENVNVDQPNPFADGETAITPQSIIDVNQEDARMFVFQPGTTLNDLVRAVNQIGAAPGDMIAVLEALKQAGALSGELIVI.

The first 23 residues, Met-1 to Ala-23, serve as a signal peptide directing secretion.

It belongs to the FlgI family. In terms of assembly, the basal body constitutes a major portion of the flagellar organelle and consists of four rings (L,P,S, and M) mounted on a central rod.

The protein resides in the periplasm. The protein localises to the bacterial flagellum basal body. Functionally, assembles around the rod to form the L-ring and probably protects the motor/basal body from shearing forces during rotation. The protein is Flagellar P-ring protein of Idiomarina loihiensis (strain ATCC BAA-735 / DSM 15497 / L2-TR).